The following is an 86-amino-acid chain: Small ribosomal subunit protein bS18 (86 aa).

Belongs to the bacterial ribosomal protein bS18 family. As to quaternary structure, part of the 30S ribosomal subunit. Forms a tight heterodimer with protein bS6.

Its function is as follows. Binds as a heterodimer with protein bS6 to the central domain of the 16S rRNA, where it helps stabilize the platform of the 30S subunit. The sequence is that of Small ribosomal subunit protein bS18 from Protochlamydia amoebophila (strain UWE25).